Here is a 276-residue protein sequence, read N- to C-terminus: Large ribosomal subunit protein uL2 (276 aa).

The tract at residues 221–276 (RGSVMNPNDHPHGGGEGRAPIGRKAPVTPWGKPTLGLKTRKKKNKSDQYIIRRRKK) is disordered.

It belongs to the universal ribosomal protein uL2 family. As to quaternary structure, part of the 50S ribosomal subunit. Forms a bridge to the 30S subunit in the 70S ribosome.

Its function is as follows. One of the primary rRNA binding proteins. Required for association of the 30S and 50S subunits to form the 70S ribosome, for tRNA binding and peptide bond formation. It has been suggested to have peptidyltransferase activity; this is somewhat controversial. Makes several contacts with the 16S rRNA in the 70S ribosome. In Brevibacillus brevis (strain 47 / JCM 6285 / NBRC 100599), this protein is Large ribosomal subunit protein uL2.